Reading from the N-terminus, the 1115-residue chain is Gamma tubulin complex adapter mto1 (1115 aa).

Residues leucine 25–leucine 180 form a disordered region. Basic and acidic residues-rich tracts occupy residues glutamate 28 to serine 41 and glutamate 56 to lysine 71. 3 stretches are compositionally biased toward polar residues: residues serine 72 to leucine 102, aspartate 119 to isoleucine 130, and proline 139 to glutamate 151. Serine 94 is subject to Phosphoserine. Over residues serine 165 to serine 176 the composition is skewed to low complexity. The stretch at asparagine 445–valine 915 forms a coiled coil. The required for interaction with mto2 stretch occupies residues leucine 523–leucine 537. Residues glycine 1001 to arginine 1011 show a composition bias toward polar residues. Disordered stretches follow at residues glycine 1001–arginine 1037 and glutamate 1067–lysine 1115. Phosphoserine occurs at positions 1005 and 1009. Basic and acidic residues-rich tracts occupy residues valine 1016–leucine 1025 and glutamate 1067–aspartate 1084. Positions lysine 1072–serine 1102 form a coiled coil. 2 stretches are compositionally biased toward polar residues: residues isoleucine 1086 to glutamine 1095 and serine 1104 to lysine 1115.

As to quaternary structure, interacts with mto2; the interaction is direct and required for efficient binding to the gamma-tubulin complex. Interacts with gamma tubulin complex subunits alp4, alp6 and gtb1. Interacts with mcp6.

It localises to the cytoplasm. It is found in the cytoskeleton. The protein resides in the microtubule organizing center. The protein localises to the spindle pole body. Its function is as follows. Spindle pole body (SPB) component that acts as the gamma-tubulin complex-binding protein of the SPB outer plaque. Promotes nucleation of all cytoplasmic microtubules by recruiting the gamma-tubulin complex to the spindle pole body (SPB), to the interphase microtubule organizing center (iMTOC), and to the equatorial MTOC (eMTOC) during anaphase. The chain is Gamma tubulin complex adapter mto1 from Schizosaccharomyces pombe (strain 972 / ATCC 24843) (Fission yeast).